Here is a 350-residue protein sequence, read N- to C-terminus: Casein kinase II subunit alpha' (350 aa).

One can recognise a Protein kinase domain in the interval 40–325; that stretch reads YQLVRKLGRG…AKEAMEHPYF (286 aa). ATP contacts are provided by residues 46–54 and Lys-69; that span reads LGRGKYSEV. Asp-157 (proton acceptor) is an active-site residue.

This sequence belongs to the protein kinase superfamily. Ser/Thr protein kinase family. CK2 subfamily. In terms of assembly, tetramer composed of an alpha chain, an alpha' and two beta chains.

It carries out the reaction L-seryl-[protein] + ATP = O-phospho-L-seryl-[protein] + ADP + H(+). The enzyme catalyses L-threonyl-[protein] + ATP = O-phospho-L-threonyl-[protein] + ADP + H(+). Its function is as follows. Casein kinases are operationally defined by their preferential utilization of acidic proteins such as caseins as substrates. The alpha and alpha' chains contain the catalytic site. Participates in Wnt signaling. This chain is Casein kinase II subunit alpha', found in Gallus gallus (Chicken).